Consider the following 709-residue polypeptide: Elongation factor G (709 aa).

The tr-type G domain maps to 9–295 (AKVRNIGIMA…AVVRYLPTPL (287 aa)). GTP is bound by residues 18–25 (AHIDAGKT), 86–90 (DTPGH), and 140–143 (NKLD).

It belongs to the TRAFAC class translation factor GTPase superfamily. Classic translation factor GTPase family. EF-G/EF-2 subfamily.

Its subcellular location is the cytoplasm. Catalyzes the GTP-dependent ribosomal translocation step during translation elongation. During this step, the ribosome changes from the pre-translocational (PRE) to the post-translocational (POST) state as the newly formed A-site-bound peptidyl-tRNA and P-site-bound deacylated tRNA move to the P and E sites, respectively. Catalyzes the coordinated movement of the two tRNA molecules, the mRNA and conformational changes in the ribosome. This is Elongation factor G from Streptomyces avermitilis (strain ATCC 31267 / DSM 46492 / JCM 5070 / NBRC 14893 / NCIMB 12804 / NRRL 8165 / MA-4680).